The sequence spans 159 residues: Endoribonuclease YbeY (159 aa).

Histidine 125, histidine 129, and histidine 135 together coordinate Zn(2+).

Belongs to the endoribonuclease YbeY family. Zn(2+) is required as a cofactor.

It is found in the cytoplasm. Single strand-specific metallo-endoribonuclease involved in late-stage 70S ribosome quality control and in maturation of the 3' terminus of the 16S rRNA. This Lactiplantibacillus plantarum (strain ATCC BAA-793 / NCIMB 8826 / WCFS1) (Lactobacillus plantarum) protein is Endoribonuclease YbeY.